We begin with the raw amino-acid sequence, 853 residues long: DNA mismatch repair protein MutS (853 aa).

614-621 contacts ATP; it reads GPNMGGKS.

It belongs to the DNA mismatch repair MutS family.

Its function is as follows. This protein is involved in the repair of mismatches in DNA. It is possible that it carries out the mismatch recognition step. This protein has a weak ATPase activity. This Escherichia coli O81 (strain ED1a) protein is DNA mismatch repair protein MutS.